An 842-amino-acid chain; its full sequence is Elongation factor 2 (842 aa).

One can recognise a tr-type G domain in the interval 17-346 (TNVRNMSVIA…MIVLHLPSPV (330 aa)). Residues 26–33 (AHVDHGKS), 158–161 (NKVD), and 213–215 (SGL) each bind GTP. Residue K509 is modified to N6,N6,N6-trimethyllysine; by EFM3; alternate. K509 is subject to N6,N6-dimethyllysine; by EFM3; alternate. The residue at position 509 (K509) is an N6-methyllysine; by EFM3; alternate. S579 is subject to Phosphoserine. K613 carries the N6,N6-dimethyllysine; by EFM2; alternate modification. The residue at position 613 (K613) is an N6-methyllysine; by EFM2; alternate. Position 699 is a diphthamide (H699). Phosphothreonine occurs at positions 713 and 763. Residue K841 forms a Glycyl lysine isopeptide (Lys-Gly) (interchain with G-Cter in ubiquitin) linkage.

This sequence belongs to the TRAFAC class translation factor GTPase superfamily. Classic translation factor GTPase family. EF-G/EF-2 subfamily. As to quaternary structure, binds to 80S ribosomes. Actively translating ribosomes show mutually exclusive binding of eIF5a (HYP2 or ANB1) and EFT1/eEF2. Interacts with the 40S ribosomal subunit protein RPL9A; the interaction is direct. Interacts with the 60S ribosomal subunit proteins RPL12A; the interaction is direct. Interacts with RPS23A; the interaction is direct. Interacts with 18S rRNA; the interaction is direct. Interacts with 25S rRNA; the interaction is direct. Interacts with RPL0. Interacts with STM1; promoting ribosome inactivation. Post-translationally, (Microbial infection) Diphthamide can be ADP-ribosylated by diphtheria toxin and by Pseudomonas exotoxin A, thus abolishing its function.

The protein localises to the cytoplasm. The catalysed reaction is GTP + H2O = GDP + phosphate + H(+). Its pathway is protein biosynthesis; polypeptide chain elongation. Inhibited by fusidic acid and sordarin, which prevent the release of eEF2 from the ribosome after the translocation step. While fusidic acid acts on all eukaryotic eEF2, sordarin specifically binds and inhibits only selected fungal eEF2. Functionally, catalyzes the GTP-dependent ribosomal translocation step during translation elongation. During this step, the ribosome changes from the pre-translocational (PRE) to the post-translocational (POST) state as the newly formed A-site-bound peptidyl-tRNA and P-site-bound deacylated tRNA move to the P and E sites, respectively. Catalyzes the coordinated movement of the two tRNA molecules, the mRNA and conformational changes in the ribosome. The sequence is that of Elongation factor 2 (EFT1) from Saccharomyces cerevisiae (strain ATCC 204508 / S288c) (Baker's yeast).